A 430-amino-acid chain; its full sequence is MIQIVTVRSGDSVYSLASKYGSTPDEIVKDNGLNPAETLVVGQALIVNTKGNNYYVQPGDSLYRISQTYNVPLASLAKVNNLSLKSILHVGQQLYIPKGTKRAVESIAYLQPSTIPIKESLVNATRAINPFLTYLAYFSFEAKRDGTLKEPTETAKIANIATQGNTIPMLVITNIENGNFSADLTSVILRDATIQNKFITNILQTAEKYGMRDIHFDFESVAPEDREAYNRFLRNVKTRLPSGYTLSTTLVPKTSSNQKGKFFETHDYKAQGQIVDFVVIMTYDWGWQGGPPMAISPIGPVKEVLQYAKSQMPPQKIMMGQNLYGFDWKLPFKEGNPPAKAISSVAAVALARKYNVPIRYDFTAQAPHFNYFDENGVQHEVWFEDSRSVQSKFNLMKEQGIGGISYWKIGLPFPQNWRLLVENFTITKKG.

LysM domains are found at residues 3–47 (QIVT…ALIV) and 52–96 (NNYY…QLYI). A GH18 domain is found at 104 to 430 (VESIAYLQPS…VENFTITKKG (327 aa)). Glu219 functions as the Proton donor in the catalytic mechanism.

It belongs to the glycosyl hydrolase 18 family. Chitinase class II subfamily.

It is found in the forespore. In terms of biological role, N-acetylglucosaminidase involved in cortex peptidoglycan degradation during germination. Cleaves only partially degraded spore peptidoglycans. Recognizes muramic acid delta-lactam residues specific to spore peptidoglycans. This is Cortical fragment-lytic enzyme from Bacillus anthracis.